The following is a 498-amino-acid chain: DNA primase (498 aa).

The segment at 35–59 (CPFHPDDTPSFYVSPSKQIFKCFGC) adopts a CHC2-type zinc-finger fold. Positions 243 to 324 (GFAILVEGYF…EVYPVYLPEG (82 aa)) constitute a Toprim domain. Mg(2+)-binding residues include Glu249, Asp293, and Asp295.

The protein belongs to the DnaG primase family. As to quaternary structure, monomer. Interacts with DnaB. Zn(2+) serves as cofactor. It depends on Mg(2+) as a cofactor.

It carries out the reaction ssDNA + n NTP = ssDNA/pppN(pN)n-1 hybrid + (n-1) diphosphate.. RNA polymerase that catalyzes the synthesis of short RNA molecules used as primers for DNA polymerase during DNA replication. In Aquifex aeolicus (strain VF5), this protein is DNA primase.